Here is a 416-residue protein sequence, read N- to C-terminus: Serine hydroxymethyltransferase (416 aa).

(6S)-5,6,7,8-tetrahydrofolate contacts are provided by residues Leu118 and 122-124 (GHL). An N6-(pyridoxal phosphate)lysine modification is found at Lys226. Glu242 contacts (6S)-5,6,7,8-tetrahydrofolate.

The protein belongs to the SHMT family. As to quaternary structure, homodimer. Pyridoxal 5'-phosphate is required as a cofactor.

It localises to the cytoplasm. The catalysed reaction is (6R)-5,10-methylene-5,6,7,8-tetrahydrofolate + glycine + H2O = (6S)-5,6,7,8-tetrahydrofolate + L-serine. It participates in one-carbon metabolism; tetrahydrofolate interconversion. The protein operates within amino-acid biosynthesis; glycine biosynthesis; glycine from L-serine: step 1/1. Its function is as follows. Catalyzes the reversible interconversion of serine and glycine with tetrahydrofolate (THF) serving as the one-carbon carrier. This reaction serves as the major source of one-carbon groups required for the biosynthesis of purines, thymidylate, methionine, and other important biomolecules. Also exhibits THF-independent aldolase activity toward beta-hydroxyamino acids, producing glycine and aldehydes, via a retro-aldol mechanism. In Helicobacter pylori (strain HPAG1), this protein is Serine hydroxymethyltransferase.